Consider the following 168-residue polypeptide: Disulfide bond formation protein B (168 aa).

Topologically, residues 1–11 (MSNPMRPVRSI) are cytoplasmic. The chain crosses the membrane as a helical span at residues 12–28 (LLAIFTGCAGLIGYALY). The Periplasmic portion of the chain corresponds to 29 to 46 (LQLVENLLPCPLCVVQRM). C38 and C41 form a disulfide bridge. Residues 47–63 (AYWLIGLTALAGFFHTP) form a helical membrane-spanning segment. The Cytoplasmic segment spans residues 64-69 (ETTGRR). A helical transmembrane segment spans residues 70–87 (IYAGLMAVFAFTGGLVAL). At 88 to 143 (RQAWLVRYPEAFECGISPEEAFLNALPLARWWPVMFEANGDCADVTWKFASLTLPD) the chain is on the periplasmic side. A disulfide bond links C101 and C129. Residues 144-162 (WSAIFFMILAALSIYVLLV) form a helical membrane-spanning segment. Residues 163–168 (RENQRE) lie on the Cytoplasmic side of the membrane.

The protein belongs to the DsbB family.

The protein localises to the cell inner membrane. Its function is as follows. Required for disulfide bond formation in some periplasmic proteins. Acts by oxidizing the DsbA protein. This chain is Disulfide bond formation protein B, found in Nitrosospira multiformis (strain ATCC 25196 / NCIMB 11849 / C 71).